A 428-amino-acid polypeptide reads, in one-letter code: Enolase (428 aa).

(2R)-2-phosphoglycerate is bound at residue glutamine 163. The active-site Proton donor is the glutamate 205. Residues aspartate 242, glutamate 286, and aspartate 313 each contribute to the Mg(2+) site. Residues lysine 338, arginine 367, serine 368, and lysine 389 each coordinate (2R)-2-phosphoglycerate. Lysine 338 (proton acceptor) is an active-site residue.

It belongs to the enolase family. Mg(2+) is required as a cofactor.

Its subcellular location is the cytoplasm. The protein resides in the secreted. It is found in the cell surface. It carries out the reaction (2R)-2-phosphoglycerate = phosphoenolpyruvate + H2O. Its pathway is carbohydrate degradation; glycolysis; pyruvate from D-glyceraldehyde 3-phosphate: step 4/5. Its function is as follows. Catalyzes the reversible conversion of 2-phosphoglycerate (2-PG) into phosphoenolpyruvate (PEP). It is essential for the degradation of carbohydrates via glycolysis. This chain is Enolase, found in Geobacter sulfurreducens (strain ATCC 51573 / DSM 12127 / PCA).